A 76-amino-acid chain; its full sequence is uncharacterized protein (76 aa).

Belongs to the IIV-6 342R family.

This is an uncharacterized protein from Invertebrate iridescent virus 3 (IIV-3).